Consider the following 190-residue polypeptide: Adenine phosphoribosyltransferase (190 aa).

Belongs to the purine/pyrimidine phosphoribosyltransferase family. Homodimer.

It localises to the cytoplasm. It carries out the reaction AMP + diphosphate = 5-phospho-alpha-D-ribose 1-diphosphate + adenine. The protein operates within purine metabolism; AMP biosynthesis via salvage pathway; AMP from adenine: step 1/1. Catalyzes a salvage reaction resulting in the formation of AMP, that is energically less costly than de novo synthesis. This Cupriavidus pinatubonensis (strain JMP 134 / LMG 1197) (Cupriavidus necator (strain JMP 134)) protein is Adenine phosphoribosyltransferase.